A 198-amino-acid polypeptide reads, in one-letter code: ATP-dependent Clp protease proteolytic subunit (198 aa).

Catalysis depends on serine 98, which acts as the Nucleophile. The active site involves histidine 123.

It belongs to the peptidase S14 family. Fourteen ClpP subunits assemble into 2 heptameric rings which stack back to back to give a disk-like structure with a central cavity, resembling the structure of eukaryotic proteasomes.

It is found in the cytoplasm. The enzyme catalyses Hydrolysis of proteins to small peptides in the presence of ATP and magnesium. alpha-casein is the usual test substrate. In the absence of ATP, only oligopeptides shorter than five residues are hydrolyzed (such as succinyl-Leu-Tyr-|-NHMec, and Leu-Tyr-Leu-|-Tyr-Trp, in which cleavage of the -Tyr-|-Leu- and -Tyr-|-Trp bonds also occurs).. Cleaves peptides in various proteins in a process that requires ATP hydrolysis. Has a chymotrypsin-like activity. Plays a major role in the degradation of misfolded proteins. This Listeria monocytogenes serovar 1/2a (strain ATCC BAA-679 / EGD-e) protein is ATP-dependent Clp protease proteolytic subunit.